Here is a 79-residue protein sequence, read N- to C-terminus: SALFLAMHYTPDTLTAFSSVAHICRDVNYGWLIRYMHANGSSLFFICLYLHIGRGIYYGSYSYTETWNIGIILLFLTMA.

3 helical membrane passes run 1 to 7, 31 to 52, and 67 to 79; these read SALFLAM, WLIRYMHANGSSLFFICLYLHI, and WNIGIILLFLTMA. Residues H37 and H51 each contribute to the heme b site.

This sequence belongs to the cytochrome b family. In terms of assembly, the cytochrome bc1 complex contains 11 subunits: 3 respiratory subunits (MT-CYB, CYC1 and UQCRFS1), 2 core proteins (UQCRC1 and UQCRC2) and 6 low-molecular weight proteins (UQCRH/QCR6, UQCRB/QCR7, UQCRQ/QCR8, UQCR10/QCR9, UQCR11/QCR10 and a cleavage product of UQCRFS1). This cytochrome bc1 complex then forms a dimer. Heme b serves as cofactor.

The protein localises to the mitochondrion inner membrane. In terms of biological role, component of the ubiquinol-cytochrome c reductase complex (complex III or cytochrome b-c1 complex) that is part of the mitochondrial respiratory chain. The b-c1 complex mediates electron transfer from ubiquinol to cytochrome c. Contributes to the generation of a proton gradient across the mitochondrial membrane that is then used for ATP synthesis. The chain is Cytochrome b (MT-CYB) from Dipodomys californicus (California kangaroo rat).